The following is a 145-amino-acid chain: 3-dehydroquinate dehydratase 2 (145 aa).

Tyr-22 (proton acceptor) is an active-site residue. Substrate contacts are provided by Asn-73, His-79, and Asp-86. His-101 serves as the catalytic Proton donor. Substrate is bound by residues 102-103 and Arg-112; that span reads IS.

Belongs to the type-II 3-dehydroquinase family. In terms of assembly, homododecamer.

The catalysed reaction is 3-dehydroquinate = 3-dehydroshikimate + H2O. It functions in the pathway metabolic intermediate biosynthesis; chorismate biosynthesis; chorismate from D-erythrose 4-phosphate and phosphoenolpyruvate: step 3/7. In terms of biological role, catalyzes a trans-dehydration via an enolate intermediate. This Corynebacterium efficiens (strain DSM 44549 / YS-314 / AJ 12310 / JCM 11189 / NBRC 100395) protein is 3-dehydroquinate dehydratase 2 (aroQ2).